The following is a 555-amino-acid chain: Undecaprenyl phosphate-alpha-4-amino-4-deoxy-L-arabinose arabinosyl transferase (555 aa).

The next 11 helical transmembrane spans lie at 6–26 (GSWA…PLNG), 87–107 (FGSV…AMLM), 116–136 (LATL…YSVL), 178–198 (FMTK…PIVI), 206–226 (LLIY…PWAL), 257–277 (APFW…LALL), 293–313 (ELFF…IAKG), 315–335 (LPTY…AYAE), 351–371 (VLNG…GSGL), 384–404 (PKIV…VVSV), and 411–431 (WSWA…AIPQ).

Belongs to the glycosyltransferase 83 family.

Its subcellular location is the cell inner membrane. It catalyses the reaction 4-amino-4-deoxy-alpha-L-arabinopyranosyl di-trans,octa-cis-undecaprenyl phosphate + lipid IVA = lipid IIA + di-trans,octa-cis-undecaprenyl phosphate.. It functions in the pathway lipopolysaccharide metabolism; 4-amino-4-deoxy-beta-L-arabinose-lipid A biosynthesis. Its function is as follows. Catalyzes the transfer of the L-Ara4N moiety of the glycolipid undecaprenyl phosphate-alpha-L-Ara4N to lipid A. The modified arabinose is attached to lipid A and is required for resistance to polymyxin and cationic antimicrobial peptides. This is Undecaprenyl phosphate-alpha-4-amino-4-deoxy-L-arabinose arabinosyl transferase from Serratia proteamaculans (strain 568).